Consider the following 345-residue polypeptide: Phenylalanine--tRNA ligase alpha subunit (345 aa).

Glutamate 259 lines the Mg(2+) pocket.

This sequence belongs to the class-II aminoacyl-tRNA synthetase family. Phe-tRNA synthetase alpha subunit type 1 subfamily. As to quaternary structure, tetramer of two alpha and two beta subunits. Requires Mg(2+) as cofactor.

Its subcellular location is the cytoplasm. The enzyme catalyses tRNA(Phe) + L-phenylalanine + ATP = L-phenylalanyl-tRNA(Phe) + AMP + diphosphate + H(+). This is Phenylalanine--tRNA ligase alpha subunit from Lactococcus lactis subsp. cremoris (strain SK11).